Reading from the N-terminus, the 39-residue chain is Basic phospholipase A2 (39 aa).

Residues Tyr-27, Gly-29, and Gly-31 each contribute to the Ca(2+) site.

It belongs to the phospholipase A2 family. Group II subfamily. D49 sub-subfamily. Requires Ca(2+) as cofactor. As to expression, expressed by the venom gland.

It localises to the secreted. The enzyme catalyses a 1,2-diacyl-sn-glycero-3-phosphocholine + H2O = a 1-acyl-sn-glycero-3-phosphocholine + a fatty acid + H(+). Its activity is regulated as follows. Is selectively inhibited by the gamma-phospholipase A2 inhibitor (PLI) CgMIP-I (AC P0DQP7) but not by the alpha-PLI CgMIP-II (AC P0DQP8). Functionally, snake venom phospholipase A2 (PLA2) that shows high myotoxic activities, induces mild edema, and shows cytolytic, and anti-coagulant activities, as well as intracerebral lethal effect. Does not induce lethality at a dose of 5 ug/g, when intravenously injected into mice. PLA2 catalyzes the calcium-dependent hydrolysis of the 2-acyl groups in 3-sn-phosphoglycerides. This chain is Basic phospholipase A2, found in Cerrophidion godmani (Porthidium godmani).